A 153-amino-acid chain; its full sequence is UPF0127 protein TGAM_1372 (153 aa).

This sequence belongs to the UPF0127 family.

This chain is UPF0127 protein TGAM_1372, found in Thermococcus gammatolerans (strain DSM 15229 / JCM 11827 / EJ3).